The primary structure comprises 307 residues: Ribonuclease Z (307 aa).

Residues histidine 63, histidine 65, aspartate 67, histidine 68, histidine 141, aspartate 212, and histidine 270 each coordinate Zn(2+). The active-site Proton acceptor is the aspartate 67.

It belongs to the RNase Z family. Homodimer. Zn(2+) serves as cofactor.

It carries out the reaction Endonucleolytic cleavage of RNA, removing extra 3' nucleotides from tRNA precursor, generating 3' termini of tRNAs. A 3'-hydroxy group is left at the tRNA terminus and a 5'-phosphoryl group is left at the trailer molecule.. Zinc phosphodiesterase, which displays some tRNA 3'-processing endonuclease activity. Probably involved in tRNA maturation, by removing a 3'-trailer from precursor tRNA. The polypeptide is Ribonuclease Z (Bacillus cereus (strain ZK / E33L)).